Here is a 415-residue protein sequence, read N- to C-terminus: Tyrosine--tRNA ligase (415 aa).

An L-tyrosine-binding site is contributed by tyrosine 34. The 'HIGH' region motif lies at 39-48 (PTADSLHLGH). 2 residues coordinate L-tyrosine: tyrosine 164 and glutamine 168. Positions 226–230 (KFGKS) match the 'KMSKS' region motif. Lysine 229 is an ATP binding site. The S4 RNA-binding domain maps to 348–415 (KNVVDFLVDG…KKKYFLGKVK (68 aa)).

This sequence belongs to the class-I aminoacyl-tRNA synthetase family. TyrS type 1 subfamily. As to quaternary structure, homodimer.

It localises to the cytoplasm. It carries out the reaction tRNA(Tyr) + L-tyrosine + ATP = L-tyrosyl-tRNA(Tyr) + AMP + diphosphate + H(+). Functionally, catalyzes the attachment of tyrosine to tRNA(Tyr) in a two-step reaction: tyrosine is first activated by ATP to form Tyr-AMP and then transferred to the acceptor end of tRNA(Tyr). This Leuconostoc mesenteroides subsp. mesenteroides (strain ATCC 8293 / DSM 20343 / BCRC 11652 / CCM 1803 / JCM 6124 / NCDO 523 / NBRC 100496 / NCIMB 8023 / NCTC 12954 / NRRL B-1118 / 37Y) protein is Tyrosine--tRNA ligase.